Reading from the N-terminus, the 583-residue chain is MAEKGDCIASVYGYDLGGRFIDFQPLGFGVNGLVLSATDSRACRKVAVKKIVLSDARSMKHALREIKIIRRLDHDNIVKVYEVLGPKGSDLQGELFKFSVAYIVQEYMETDLACLLEQGTLTEDHAKLFMYQLLRGLKYIHSANVLHRDLKPANIFISTEDLVLKIGDFGLARIVDQHYSHKGYLSEGLVTKWYRSPRLLLSPNNYTKAIDMWAAGCILAEMLTGKMLFAGAHELEQMQLILDTIPVVREEDKEELLRVMPSFVSSTWEVKRPLRKLLPDVNSEAIDFLEKILTFNPMDRLTAEMGLQHPYMSPYSCPEDEPTSQHPFRIEDEIDDIVLMAASQSQLSNWDRYPVSLSSDLEWRPDRCQDASEVQRDPRAGSTPLAEDVQVDPRKDSQSSSERFLEQSHSSMERAFEADYGRSCDYKVGSPSYLDKLLWRDNKPHHYSEPKLILDLSHWKQAASAPPRAAVAADPVSREDEPASLFLEIAQWVKSTQSGSERASPPPDAPEPRLSASPPGHPTPIDGGASPQFDLDVFISRALKLCTKPEDLPENKLGDLNGACISEHPGDLVQTEAFSKERW.

Residues 20-312 enclose the Protein kinase domain; it reads FIDFQPLGFG…AEMGLQHPYM (293 aa). ATP is bound by residues 26 to 34 and lysine 49; that span reads LGFGVNGLV. Residue aspartate 149 is the Proton acceptor of the active site. Serine 186 is subject to Phosphoserine; by PAK1, PAK2 and PAK3. The SEG motif motif lies at 186 to 188; that stretch reads SEG. The short motif at 328–333 is the FRIEDE motif element; that stretch reads FRIEDE. Basic and acidic residues-rich tracts occupy residues 366–379 and 391–410; these read DRCQ…RDPR and VDPR…QSHS. The disordered stretch occupies residues 366–410; that stretch reads DRCQDASEVQRDPRAGSTPLAEDVQVDPRKDSQSSSERFLEQSHS. A Phosphoserine modification is found at serine 430. The interval 495–531 is disordered; the sequence is STQSGSERASPPPDAPEPRLSASPPGHPTPIDGGASP.

Belongs to the protein kinase superfamily. CMGC Ser/Thr protein kinase family. MAP kinase subfamily. As to quaternary structure, homodimer. Heterodimer with ERK3/MAPK6. Interacts with (via FRIEDE motif) MAPKAPK5. It depends on Mg(2+) as a cofactor. In terms of processing, phosphorylated at Ser-186 by PAK1, PAK2 and PAK3 resulting in catalytic activation. Phosphorylated by MAPKAPK5 at other sites.

The protein resides in the cytoplasm. It localises to the nucleus. The enzyme catalyses L-seryl-[protein] + ATP = O-phospho-L-seryl-[protein] + ADP + H(+). The catalysed reaction is L-threonyl-[protein] + ATP = O-phospho-L-threonyl-[protein] + ADP + H(+). With respect to regulation, activated by phosphorylation at Ser-186. In terms of biological role, atypical MAPK protein. Phosphorylates microtubule-associated protein 2 (MAP2) and MAPKAPK5. The precise role of the complex formed with MAPKAPK5 is still unclear, but the complex follows a complex set of phosphorylation events: upon interaction with atypical MAPKAPK5, ERK4/MAPK4 is phosphorylated at Ser-186 and then mediates phosphorylation and activation of MAPKAPK5, which in turn phosphorylates ERK4/MAPK4. May promote entry in the cell cycle. This chain is Mitogen-activated protein kinase 4 (Mapk4), found in Mus musculus (Mouse).